Here is a 67-residue protein sequence, read N- to C-terminus: MMFRLTSVSCFLLVIACLNLFQVVLTSRCFPPGIYCTPYLPCCWGICCGTCRNVCHLRFGKRATFQE.

Positions 1-26 (MMFRLTSVSCFLLVIACLNLFQVVLT) are cleaved as a signal peptide. Cystine bridges form between Cys-29/Cys-43, Cys-36/Cys-48, Cys-42/Cys-51, and Cys-47/Cys-55. Position 59 is a phenylalanine amide (Phe-59). Positions 63-67 (ATFQE) are excised as a propeptide.

It belongs to the conotoxin I2 superfamily. In terms of tissue distribution, expressed by the venom duct.

The protein resides in the secreted. Its function is as follows. Inhibits the vertebrate voltage-gated potassium channels Kv1.1/KCNA1 and Kv1.3/KCNA3. This Conus emaciatus (False virgin cone) protein is Kappa-conotoxin-like Em11.8.